The chain runs to 383 residues: Corticosteroid-binding globulin (383 aa).

N-linked (GlcNAc...) asparagine glycosylation is found at Asn74 and Asn154. Gln232 is a cortisol binding site. N-linked (GlcNAc...) asparagine glycosylation is present at Asn238. Cortisol is bound at residue Gln264. N-linked (GlcNAc...) asparagine glycosylation occurs at Asn308. Trp371 is a binding site for cortisol.

It belongs to the serpin family. Produced and secreted by hepatocytes, but has also been identified in a number of glycocorticoid responsive cells (it is found in maternal lung, spleen, and ovary and fetal kidney).

The protein localises to the secreted. Its function is as follows. Major transport protein for glucocorticoids and progestins in the blood of almost all vertebrate species. The protein is Corticosteroid-binding globulin (SERPINA6) of Oryctolagus cuniculus (Rabbit).